Here is a 473-residue protein sequence, read N- to C-terminus: Cysteine--tRNA ligase (473 aa).

Residue Cys-27 coordinates Zn(2+). The 'HIGH' region signature appears at 29–39 (ITPYDHMHVGH). 3 residues coordinate Zn(2+): Cys-213, His-238, and Glu-242. Residues 271–275 (KMSKS) carry the 'KMSKS' region motif. Lys-274 provides a ligand contact to ATP.

This sequence belongs to the class-I aminoacyl-tRNA synthetase family. Requires Zn(2+) as cofactor.

Its subcellular location is the cytoplasm. The enzyme catalyses tRNA(Cys) + L-cysteine + ATP = L-cysteinyl-tRNA(Cys) + AMP + diphosphate. The polypeptide is Cysteine--tRNA ligase (Pyrobaculum islandicum (strain DSM 4184 / JCM 9189 / GEO3)).